Reading from the N-terminus, the 276-residue chain is Anthranilate synthase beta subunit 1, chloroplastic (276 aa).

The N-terminal 50 residues, 1 to 50 (MAASTLYKSCLLQPKSGSTTRRLNPSLVNPLTNPTRVSVLGKSRRDVFAK), are a transit peptide targeting the chloroplast. Positions 74-273 (PIIVIDNYDS…IKIVEKKESE (200 aa)) constitute a Glutamine amidotransferase type-1 domain. C152 acts as the Nucleophile in catalysis. Residues H247 and E249 contribute to the active site.

In terms of assembly, heterotetramer consisting of two non-identical subunits: a beta subunit and a large alpha subunit. Expressed in the central cylinder of mature primary root zones, including pericycle and early lateral root primordia, and vasculature of cotyledons.

The protein localises to the plastid. Its subcellular location is the chloroplast. The catalysed reaction is chorismate + L-glutamine = anthranilate + pyruvate + L-glutamate + H(+). The protein operates within amino-acid biosynthesis; L-tryptophan biosynthesis; L-tryptophan from chorismate: step 1/5. Its function is as follows. Part of a heterotetrameric complex that catalyzes the two-step biosynthesis of anthranilate, an intermediate in the biosynthesis of L-tryptophan. In the first step, the glutamine-binding beta subunit of anthranilate synthase (AS) provides the glutamine amidotransferase activity which generates ammonia as a substrate that, along with chorismate, is used in the second step, catalyzed by the large alpha subunit of AS to produce anthranilate. Plays an important regulatory role in auxin production via the tryptophan-dependent biosynthetic pathway. This Arabidopsis thaliana (Mouse-ear cress) protein is Anthranilate synthase beta subunit 1, chloroplastic (ASB1).